Reading from the N-terminus, the 88-residue chain is Small ribosomal subunit protein uS17 (88 aa).

The protein belongs to the universal ribosomal protein uS17 family. Part of the 30S ribosomal subunit.

Its function is as follows. One of the primary rRNA binding proteins, it binds specifically to the 5'-end of 16S ribosomal RNA. This Mycoplasmopsis pulmonis (strain UAB CTIP) (Mycoplasma pulmonis) protein is Small ribosomal subunit protein uS17.